Here is a 114-residue protein sequence, read N- to C-terminus: Transcription initiation factor IIA subunit 2 (114 aa).

This sequence belongs to the TFIIA subunit 2 family. In terms of assembly, TFIIA is a heterodimer composed of the large toa1 and the small toa2 subunits.

It is found in the nucleus. TFIIA is a component of the transcription machinery of RNA polymerase II and plays an important role in transcriptional activation. TFIIA in a complex with tbp mediates transcriptional activity. This chain is Transcription initiation factor IIA subunit 2 (toa2), found in Fusarium vanettenii (strain ATCC MYA-4622 / CBS 123669 / FGSC 9596 / NRRL 45880 / 77-13-4) (Fusarium solani subsp. pisi).